A 1145-amino-acid polypeptide reads, in one-letter code: Structure-specific endonuclease subunit SLX4 (1145 aa).

The tract at residues 48–108 (ADIPVQPDPP…GKSKQQPSIS (61 aa)) is disordered. Residues 321 to 372 (ERETQKCRQLRQQHELVYAELERYYGDPQKLEEEVMQELDELEKLVADNMIE) adopt a coiled-coil conformation. A compositionally biased stretch (low complexity) spans 382-393 (EAESSSTGSSPS). Disordered regions lie at residues 382 to 442 (EAES…EDEP), 613 to 634 (QSSH…SSFS), and 666 to 689 (SAEK…DLTQ). The span at 395–410 (EPPDKRPKMTMEDKEN) shows a compositional bias: basic and acidic residues. Composition is skewed to polar residues over residues 411 to 430 (LQPT…TRCT), 613 to 633 (QSSH…SSSF), and 678 to 689 (YKQSDASVDLTQ).

It belongs to the SLX4 family. In terms of assembly, forms a heterodimer with SLX1. Interacts with mei-9; catalytic subunit of the MEI-9-ERCC1 endonuclease.

The protein resides in the nucleus. In terms of biological role, regulatory subunit that interacts with and increases the activity of different structure-specific endonucleases. Has several distinct roles in protecting genome stability by resolving diverse forms of deleterious DNA structures originating from replication and recombination intermediates and from DNA damage. Component of the SLX1-SLX4 structure-specific endonuclease that resolves DNA secondary structures generated during DNA repair and recombination. Has endonuclease activity towards branched DNA substrates, introducing single-strand cuts in duplex DNA close to junctions with ss-DNA. Interacts with the structure-specific MEI-9-ERCC1 endonuclease to generate meiotic crossovers. In Drosophila melanogaster (Fruit fly), this protein is Structure-specific endonuclease subunit SLX4 (mus312).